Consider the following 288-residue polypeptide: Serine/threonine-protein acetyltransferase YopJ (288 aa).

Residues His109 and Glu128 contribute to the active site. His109 provides a ligand contact to CoA. 167-168 (RS) lines the CoA pocket. Cys172 is an active-site residue. Residues 182–185 (KLYI) and 224–225 (KH) each bind 1D-myo-inositol hexakisphosphate. CoA is bound at residue 227 to 230 (QGKK). Arg257 lines the 1D-myo-inositol hexakisphosphate pocket. 266-270 (DGKEL) contributes to the CoA binding site.

Belongs to the acetyltransferase YopJ family. The cofactor is 1D-myo-inositol hexakisphosphate.

The protein resides in the secreted. It carries out the reaction L-threonyl-[protein] + acetyl-CoA = O-acetyl-L-threonyl-[protein] + CoA. The catalysed reaction is L-seryl-[protein] + acetyl-CoA = O-acetyl-L-seryl-[protein] + CoA. 1D-myo-inositol hexakisphosphate activates protein-acetyltransferase activity via an allosteric mechanism: 1D-myo-inositol hexakisphosphate-binding induces a conformational rearrangement that stimulates the interaction with acetyl-CoA. Serine/threonine-protein acetyltransferase translocated into infected cells, which inhibits the host immune response and induces cell death by mediating acetylation of target proteins. Inhibits the MAPK and NF-kappa-B signaling pathways by acetylating protein-kinases such as MAP2K1, MAP2K6, MAP3K7/TAK1 and I-kappa-B kinase (CHUK/IKKA and IKBKB) on serine and threonine residues critical for their activation by phosphorylation, thereby preventing protein-kinase activation. Promotes pyroptosis, a programmed cell death, in host cells by mediating acetylation of MAP3K7/TAK1: MAP3K7/TAK1 inactivation triggers activation of caspase-8 (CASP8), followed by CASP8-dependent cleavage of gasdermin-D (GSDMD) and induction of pyroptosis. Also able to induce intestinal barrier dysfunction by acetylating and inhibiting host protein-kinases RIPK2/RICK and MAP3K7/TAK1, thereby promoting cell death. The protein is Serine/threonine-protein acetyltransferase YopJ of Yersinia pseudotuberculosis serotype I (strain IP32953).